The following is a 421-amino-acid chain: Inhibitor of growth protein 3 (421 aa).

Positions Pro129 to Lys164 are disordered. Residues Lys148, Lys165, and Lys167 each participate in a glycyl lysine isopeptide (Lys-Gly) (interchain with G-Cter in SUMO2) cross-link. At Lys181 the chain carries N6-acetyllysine. Lys256 participates in a covalent cross-link: Glycyl lysine isopeptide (Lys-Gly) (interchain with G-Cter in SUMO2). The residue at position 264 (Lys264) is an N6-acetyllysine. A disordered region spans residues Thr286 to Ser324. Positions Ser308–Ser324 are enriched in low complexity. The PHD-type zinc-finger motif lies at Pro363–Ala412. Zn(2+) is bound by residues Cys366, Cys368, Cys379, Cys384, His390, Cys393, Cys406, and Cys409.

Belongs to the ING family. In terms of assembly, interacts with H3K4me3 and to a lesser extent with H3K4me2. Component of the NuA4 histone acetyltransferase complex which contains the catalytic subunit KAT5/TIP60 and the subunits EP400, TRRAP/PAF400, BRD8/SMAP, EPC1, DMAP1/DNMAP1, RUVBL1/TIP49, RUVBL2, ING3, actin, ACTL6A/BAF53A, MORF4L1/MRG15, MORF4L2/MRGX, MRGBP, YEATS4/GAS41, VPS72/YL1 and MEAF6. The NuA4 complex interacts with MYC. HTATTIP/TIP60, EPC1, and ING3 together constitute a minimal HAT complex termed Piccolo NuA4. Component of a SWR1-like complex.

Its subcellular location is the nucleus. Its function is as follows. Component of the NuA4 histone acetyltransferase (HAT) complex which is involved in transcriptional activation of select genes principally by acetylation of nucleosomal histones H4 and H2A. This modification may both alter nucleosome - DNA interactions and promote interaction of the modified histones with other proteins which positively regulate transcription. This complex may be required for the activation of transcriptional programs associated with oncogene and proto-oncogene mediated growth induction, tumor suppressor mediated growth arrest and replicative senescence, apoptosis, and DNA repair. NuA4 may also play a direct role in DNA repair when directly recruited to sites of DNA damage. Component of a SWR1-like complex that specifically mediates the removal of histone H2A.Z/H2AZ1 from the nucleosome. This chain is Inhibitor of growth protein 3 (Ing3), found in Rattus norvegicus (Rat).